A 207-amino-acid polypeptide reads, in one-letter code: Uracil phosphoribosyltransferase (207 aa).

Residues Arg-77, Arg-102, and 129-137 (DPMLATGVS) each bind 5-phospho-alpha-D-ribose 1-diphosphate. Residues Ile-192 and 197 to 199 (GDA) each bind uracil. Asp-198 is a binding site for 5-phospho-alpha-D-ribose 1-diphosphate.

Belongs to the UPRTase family. Mg(2+) serves as cofactor.

It carries out the reaction UMP + diphosphate = 5-phospho-alpha-D-ribose 1-diphosphate + uracil. Its pathway is pyrimidine metabolism; UMP biosynthesis via salvage pathway; UMP from uracil: step 1/1. Its activity is regulated as follows. Allosterically activated by GTP. Functionally, catalyzes the conversion of uracil and 5-phospho-alpha-D-ribose 1-diphosphate (PRPP) to UMP and diphosphate. This Fervidobacterium nodosum (strain ATCC 35602 / DSM 5306 / Rt17-B1) protein is Uracil phosphoribosyltransferase.